We begin with the raw amino-acid sequence, 361 residues long: Probable U3 small nucleolar RNA-associated protein 11 (361 aa).

Disordered stretches follow at residues 1–52 (MTKG…KKRK), 200–235 (LMSG…TPET), 262–295 (KRES…TRLL), and 311–361 (RHVR…RRAR). Positions 17 to 33 (HLKRKTHLERSQPKSRQ) are enriched in basic residues. 2 stretches are compositionally biased toward basic and acidic residues: residues 37–46 (QLEKHKDHVL) and 217–228 (RREVQEKMRRSG). Residues 278–287 (DDGEQEEAAA) show a composition bias toward acidic residues. The segment covering 342-352 (RQMEQRRESRF) has biased composition (basic and acidic residues).

Belongs to the UTP11 family. As to quaternary structure, component of the ribosomal small subunit (SSU) processome.

It is found in the nucleus. The protein localises to the nucleolus. In terms of biological role, involved in nucleolar processing of pre-18S ribosomal RNA. The sequence is that of Probable U3 small nucleolar RNA-associated protein 11 from Leishmania major.